The sequence spans 341 residues: Eukaryotic translation initiation factor 3 subunit I (341 aa).

WD repeat units lie at residues 8-49 (GHER…GTYR), 50-91 (GHQG…KTWD), 135-184 (QSDE…LLYN), 189-228 (ELNQPITDLQWSQDRTYFITASKDKTSKLISSKDLEVLKS), and 286-325 (GHFGPLNTVAADPTGKGYASGGEDGYVRVHAFDKGYYDFL).

The protein belongs to the eIF-3 subunit I family. In terms of assembly, component of the eukaryotic translation initiation factor 3 (eIF-3) complex.

It localises to the cytoplasm. Functionally, component of the eukaryotic translation initiation factor 3 (eIF-3) complex, which is involved in protein synthesis of a specialized repertoire of mRNAs and, together with other initiation factors, stimulates binding of mRNA and methionyl-tRNAi to the 40S ribosome. The eIF-3 complex specifically targets and initiates translation of a subset of mRNAs involved in cell proliferation. This chain is Eukaryotic translation initiation factor 3 subunit I, found in Chaetomium globosum (strain ATCC 6205 / CBS 148.51 / DSM 1962 / NBRC 6347 / NRRL 1970) (Soil fungus).